Consider the following 230-residue polypeptide: Flagellar L-ring protein (230 aa).

A signal peptide spans 1-22; the sequence is MSPLSNFARTALACAVAALLGG. Cysteine 23 is lipidated: N-palmitoyl cysteine. Cysteine 23 carries the S-diacylglycerol cysteine lipid modification.

The protein belongs to the FlgH family. As to quaternary structure, the basal body constitutes a major portion of the flagellar organelle and consists of four rings (L,P,S, and M) mounted on a central rod.

It localises to the cell outer membrane. Its subcellular location is the bacterial flagellum basal body. In terms of biological role, assembles around the rod to form the L-ring and probably protects the motor/basal body from shearing forces during rotation. The protein is Flagellar L-ring protein of Stenotrophomonas maltophilia (strain R551-3).